A 78-amino-acid polypeptide reads, in one-letter code: NAD(P)H-quinone oxidoreductase subunit O (78 aa).

It belongs to the complex I NdhO subunit family. As to quaternary structure, NDH-1 can be composed of about 15 different subunits; different subcomplexes with different compositions have been identified which probably have different functions.

It is found in the cellular thylakoid membrane. It catalyses the reaction a plastoquinone + NADH + (n+1) H(+)(in) = a plastoquinol + NAD(+) + n H(+)(out). It carries out the reaction a plastoquinone + NADPH + (n+1) H(+)(in) = a plastoquinol + NADP(+) + n H(+)(out). NDH-1 shuttles electrons from an unknown electron donor, via FMN and iron-sulfur (Fe-S) centers, to quinones in the respiratory and/or the photosynthetic chain. The immediate electron acceptor for the enzyme in this species is believed to be plastoquinone. Couples the redox reaction to proton translocation, and thus conserves the redox energy in a proton gradient. Cyanobacterial NDH-1 also plays a role in inorganic carbon-concentration. This is NAD(P)H-quinone oxidoreductase subunit O from Prochlorococcus marinus (strain AS9601).